Consider the following 419-residue polypeptide: G protein-activated inward rectifier potassium channel 4 (419 aa).

Over 1-86 (MAGDSRNAMN…LFTTLVDLKW (86 aa)) the chain is Cytoplasmic. Ser-5 carries the phosphoserine modification. Residues 87–111 (RFNLLVFTMVYTVTWLFFGFIWWLI) form a helical membrane-spanning segment. Topologically, residues 112-135 (AYIRGDLDHVGDQEWIPCVENLSG) are extracellular. The segment at residues 136-147 (FVSAFLFSIETE) is an intramembrane region (helical; Pore-forming). Residues 148 to 154 (TTIGYGF) constitute an intramembrane region (pore-forming). Positions 149-154 (TIGYGF) match the Selectivity filter motif. Over 155–163 (RVITEKCPE) the chain is Extracellular. A helical membrane pass occupies residues 164 to 185 (GIILLLVQAILGSIVNAFMVGC). At 186–419 (MFVKISQPKK…GGSREARGSV (234 aa)) the chain is on the cytoplasmic side. The segment at 390 to 419 (AEAGLDAEAEQNEEDEPKGLGGSREARGSV) is disordered. Residues 394 to 405 (LDAEAEQNEEDE) are compositionally biased toward acidic residues.

Belongs to the inward rectifier-type potassium channel (TC 1.A.2.1) family. KCNJ5 subfamily. In terms of assembly, associates with KCNJ3/GIRK1 to form a G-protein-activated heteromultimer pore-forming unit. The resulting inward current is much larger. Associates with KCNJ6/GIRK2 to form a G-protein-activated heteromultimer pore-forming unit. In terms of tissue distribution, islets, exocrine pancreas and heart. Expressed in the adrenal cortex, particularly the zona glomerulosa.

The protein resides in the membrane. The catalysed reaction is K(+)(in) = K(+)(out). Heteromultimer composed of KCNJ3/GIRK1 and KCNJ5/GIRK4 is activated by phosphatidylinositol 4,5 biphosphate (PtdIns(4,5)P2). Functionally, inward rectifier potassium channels are characterized by a greater tendency to allow potassium to flow into the cell rather than out of it. Their voltage dependence is regulated by the concentration of extracellular potassium; as external potassium is raised, the voltage range of the channel opening shifts to more positive voltages. The inward rectification is mainly due to the blockage of outward current by internal magnesium. Can be blocked by external barium. This potassium channel is controlled by G proteins. This chain is G protein-activated inward rectifier potassium channel 4 (KCNJ5), found in Homo sapiens (Human).